Reading from the N-terminus, the 1838-residue chain is Lysine-specific demethylase 5 (1838 aa).

The tract at residues 1–150 is disordered; that stretch reads MSAKTEADNT…SSNKFDQGKN (150 aa). Gly residues predominate over residues 15 to 31; it reads SGGGGVGSGTSSGGGAS. Low complexity predominate over residues 45–56; the sequence is RNSTGNGTNSGS. Residues 136–145 show a composition bias toward polar residues; the sequence is HTQPHSSNKF. The region spanning 161-202 is the JmjN domain; the sequence is CPVFRPTTEEFKNPLAYISKIRSIAEKCGIAKILPPATWSPP. Positions 226 to 316 constitute an ARID domain; sequence TRVKLNFLDQ…ILHPFEVYTS (91 aa). The span at 321–333 shows a compositional bias: low complexity; sequence GPTPTSSGSGSTP. 2 disordered regions span residues 321–380 and 416–437; these read GPTP…GLSG and GSPL…KGGE. The residue at position 323 (Thr323) is a Phosphothreonine. 3 stretches are compositionally biased toward polar residues: residues 351-361, 369-380, and 416-430; these read TRQQIAPPNET, FGNSNASCGLSG, and GSPL…TRGA. Residues 448–498 form a PHD-type 1 zinc finger; it reads KYICHICNRGDVEESMLLCDGCDDSYHTFCLLPPLTSIPKGEWLCPRCVVE. The JmjC domain occupies 591-757; sequence EYAESSWNLN…MGRECVNHYS (167 aa). His637, Asp640, and His725 together coordinate Fe cation. The stretch at 960 to 1049 forms a coiled coil; the sequence is VRTRSDHNQE…LRIELQQLDL (90 aa). The PHD-type 2 zinc-finger motif lies at 1293-1354; the sequence is DMFCLCKSEF…KWLCPSCVRS (62 aa). Residues 1401–1462 are disordered; that stretch reads SSPDVSAAQE…SDADDDDDED (62 aa). Over residues 1407–1417 the composition is skewed to low complexity; sequence AAQEAIMAQQQ. A phosphoserine mark is found at Ser1422 and Ser1433. Positions 1453-1462 are enriched in acidic residues; sequence SDADDDDDED. Phosphoserine is present on Ser1474. The interval 1548–1751 is disordered; it reads YMQRQRQQHT…QRSQQAAQED (204 aa). Composition is skewed to low complexity over residues 1576 to 1595, 1624 to 1650, 1658 to 1667, 1674 to 1683, and 1692 to 1736; these read NSPN…SNSG, GKKG…PGAD, ANGGNTNSST, SATTTPTPGS, and STTA…ATGG. Ser1635 and Ser1640 each carry phosphoserine. The segment at 1753-1808 adopts a PHD-type 3 zinc-finger fold; the sequence is EEECRAENCHKPTGREVDWVQCDGGCNEWFHMYCVGLNRSQIKPDDDYICIRCTKT. The disordered stretch occupies residues 1814-1838; it reads QGSGHSMSVASTTTPGKQRAVQSAR.

The protein belongs to the JARID1 histone demethylase family. As to quaternary structure, interacts with Myc. Part of a complex containing Lid, Myc and Ash2. The cofactor is Fe(2+).

It is found in the nucleus. The enzyme catalyses N(6),N(6),N(6)-trimethyl-L-lysyl(4)-[histone H3] + 3 2-oxoglutarate + 3 O2 = L-lysyl(4)-[histone H3] + 3 formaldehyde + 3 succinate + 3 CO2. Inhibited by Myc. Functionally, histone demethylase that specifically demethylates 'Lys-4' of histone H3, thereby playing a central role in histone code. Does not demethylate histone H3 'Lys-9', H3 'Lys-27', H3 'Lys-36', H3 'Lys-79' or H4 'Lys-20'. Specifically demethylates trimethylated H3 'Lys-4'. Required for the correct regulation of homeotic genes during development. Plays a role in the regulation of the circadian rhythm and in maintaining the normal periodicity of the circadian clock. Regulates the expression of clock-controlled genes including tim, per and cry. This Drosophila melanogaster (Fruit fly) protein is Lysine-specific demethylase 5.